We begin with the raw amino-acid sequence, 387 residues long: Exodeoxyribonuclease 7 large subunit (387 aa).

The protein belongs to the XseA family. Heterooligomer composed of large and small subunits.

It is found in the cytoplasm. The catalysed reaction is Exonucleolytic cleavage in either 5'- to 3'- or 3'- to 5'-direction to yield nucleoside 5'-phosphates.. Bidirectionally degrades single-stranded DNA into large acid-insoluble oligonucleotides, which are then degraded further into small acid-soluble oligonucleotides. This Campylobacter jejuni subsp. jejuni serotype O:6 (strain 81116 / NCTC 11828) protein is Exodeoxyribonuclease 7 large subunit.